The chain runs to 556 residues: MLNLCHALRGVRQFSCSVIVKVKCASCSIKLQDQDPSKPGYYTKPKSLPDSKLNPDLQDLKYLLFSQDIQLSKQAIQNDPDLKTKRDLLLRVICKRCSNALHHNNYNPEEFPESTLNDILNYVPRGSNVMHIVPFVEFPLHLDPNVLKRNDLDTTLVLTKSDQVFKDKNAVSKKVPIFMKQFLKNTLRIDSNKTFAISALKNWNISMFYNYFKNYTYLLGNPNVGKSTLINTLLQKYLGYKVKIDSTGKINSPSEEVMQEAFTNPKNFFKIQAAGVSHIPNLTRSVQAYQVGGKILFDLPGYSTSTSRLRLEEPIDERWLQRLRKTDLFNRKHIKQKTYESMKGTSQGGCYTVGGIFYLVPPKGSINQIVKYIPGPSKTFKNIEKGIDVFNSCNSSSGTHPLSRYCGIKSVICEKSQYKRYAIPPFIGSIEIVLKDIGYILLRTTGRYEFKGLHEIWIPRGIQVGIREPLENLIESGYRRYIETNGKESSCPRDRPIISSLYEMAPDEADTLNAVKKSYLEKTEKDLSARRFVDDDPYDLVQHLXKKKNPYWYYQW.

Residues 1-21 (MLNLCHALRGVRQFSCSVIVK) constitute a mitochondrion transit peptide. The CP-type G domain occupies 113–305 (ESTLNDILNY…LFDLPGYSTS (193 aa)).

The protein belongs to the TRAFAC class YlqF/YawG GTPase family. GEP3 subfamily.

The protein resides in the mitochondrion. Interacts genetically with prohibitins and thus may be involved in the mitochondrial lipid metabolism. This Saccharomyces cerevisiae (strain Zymaflore VL3) (Baker's yeast) protein is Genetic interactor of prohibitins 3, mitochondrial (GEP3).